The following is a 181-amino-acid chain: MAPDPKLPSADLPSQKQVIELLDGEFARAGYEIDDVVVNAATRPARITIVADGDKGLDLDAVAMLSRLASGLLDTVDTGDTPYVLEVTSPGVDRPLTTEKHFRRARGRKAELSLADGSSLTARLGGTDGDQVNVVVAQGKDFAVRQIPLREITKAVVQVEFSPPNRRELELAEQTGKGARA.

This sequence belongs to the RimP family.

Its subcellular location is the cytoplasm. Its function is as follows. Required for maturation of 30S ribosomal subunits. The protein is Ribosome maturation factor RimP of Mycolicibacterium smegmatis (strain ATCC 700084 / mc(2)155) (Mycobacterium smegmatis).